The sequence spans 736 residues: MEQVIQNNCSEVDPHVLSYCTGYANDAIKDVDEASDHTISLIRNLLLDAGAREEAVQLIQNELEKQFKEREEHLDTLQTNGLVRLKETIRMDSQSEISSTMGLVGEKMELDAVKGRKVESRVDRRKLEKAERKIRAKWEKRTIKAEYESSKLVQPEQKSYEEFYMAVNPLDLSGSNQGKSKDIKIDGIDLAFAGHRILTGASLTLAQGRRYGLTGRNGIGKSTLLRALSRREIAIPTHITILHVEQEMTGDDTPALQSVLDADVWRKYLIQDQEKITNRLSTIEKELEELSKDQTADQAISRRLERERDELDLRLLDIQNKLSEMDSDRAESRAATILAGLGFTQEMQSHATKTFSGGWRMRLSLARALFCQPDLLLLDEPSNMLDVPSIAFLSEYLQTYKNIVLVVSHDRSFLNEVATDIIHQHSERLDYYKGNFSQFYATREERCKNQLREYEKQMEYRKHLQSFIDKFRYNAAKSSEAQSRIKKLEKLPILEKPQTEEEVEFEFPPVEKISPPILQMSDVNFEYVPGHPILKHVDIDVQMDSRIGVVGPNGAGKSTMLKLLIEQLHPTSGIVSRHPRLRIAYFAQHHVDTLDLNLNALSFLAKTFPGKGEEEYRRHLGAFGVSGPLALQKMITLSGGQKSRVAFACLGLQNPHILILDEPTNHLDMESMDALTRAVKRFQGGVILVSHDVDFLDKTCTSIWQCDHNVVSKFDGTISQYKKFCLSQQPTMTIKT.

ABC transporter domains are found at residues 183 to 459 (IKID…KQME) and 518 to 734 (LQMS…TMTI). ATP-binding positions include 215 to 222 (GRNGIGKS) and 551 to 558 (GPNGAGKS).

The protein belongs to the ABC transporter superfamily.

The protein localises to the cytoplasm. This is an uncharacterized protein from Schizosaccharomyces pombe (strain 972 / ATCC 24843) (Fission yeast).